Consider the following 189-residue polypeptide: GTPase NRas (189 aa).

GTP-binding positions include 10–18 (GAGGVGKSA) and 29–30 (VD). The Effector region motif lies at 32 to 40 (YDPTIEDSY). 57–61 (DTAGQ) contacts GTP. Phosphoserine is present on S89. 116–119 (NKCD) contributes to the GTP binding site. A hypervariable region region spans residues 166–185 (YRLKKLNSSDDGTQGCMGSP). K170 participates in a covalent cross-link: Glycyl lysine isopeptide (Lys-Gly) (interchain with G-Cter in ubiquitin). Residue C181 is the site of S-palmitoyl cysteine attachment. C186 carries the S-farnesyl cysteine lipid modification. Positions 187-189 (VLM) are cleaved as a propeptide — removed in mature form.

This sequence belongs to the small GTPase superfamily. Ras family. In terms of assembly, interacts (active GTP-bound form preferentially) with RGS14. Interacts (active GTP-bound form) with RASSF7. Interacts (active GTP-bound form) with both SHOC2 and PP1c (all isoforms) to form a tertiary complex; SHOC2 and PP1c preferably bind M-Ras/MRAS, but they also bind K-Ras/KRAS, N-Ras/NRAS and H-Ras/HRAS. Palmitoylated by the ZDHHC9-GOLGA7 complex. Depalmitoylated by ABHD17A, ABHD17B and ABHD17C. A continuous cycle of de- and re-palmitoylation regulates rapid exchange between plasma membrane and Golgi. Post-translationally, acetylation at Lys-104 prevents interaction with guanine nucleotide exchange factors (GEFs). In terms of processing, ubiquitinated by the BCR(LZTR1) E3 ubiquitin ligase complex at Lys-170 in a non-degradative manner, leading to inhibit Ras signaling by decreasing Ras association with membranes. Phosphorylation at Ser-89 enhances NRAS association with its downstream effectors.

The protein localises to the cell membrane. The protein resides in the golgi apparatus membrane. It carries out the reaction GTP + H2O = GDP + phosphate + H(+). Its activity is regulated as follows. Alternates between an inactive form bound to GDP and an active form bound to GTP. Activated by a guanine nucleotide-exchange factor (GEF) and inactivated by a GTPase-activating protein (GAP). Ras proteins bind GDP/GTP and possess intrinsic GTPase activity. This Mus musculus (Mouse) protein is GTPase NRas (Nras).